Here is a 1420-residue protein sequence, read N- to C-terminus: MILRRLLLAGSLLLATAFTSAKKADGPKISVTKFKDEPVNLFYFDDSDTVMFQDGKNGDVYVSRDAGANWDIVDVSGMRGKAWSLLPHPTDRTKAYIMSNGGTHWVTEDQAKSWREFTVDADLSRYEYPLVFHGKDSNRVMLLGHKCNGLDCKEKTYYTTDGFKTAHLLMENGRHCAWAVSTPTFGEGLDLPKEVNDRIFCVVSGLHSSWAEANRLLYSDRFFKDEQGTEVPLDNGRAVSGVIRTASVQKYILAATKSARTNELALFVTDNASTWHRTEFDGHRVEEDAYTILESTSYSLQVDVVSTYSSTIGTLFTSNSNGTYFTRNIEHTNRNMYGFVDFEKISSIQGIILVNTVKNWEDVEKSNGVQKKVISKISFDDGRTFQPLKVGKHDLHLHSVTDATNSGRVFSSPAPGLVMGVGNTGGHLKDYLDGDLFVSDDAGINLEEKLWTMLINMNSVIKASNWHKASLPDGVQIRAKVLTTAPGSTTLKFLLLGSAKADIGMEYYIISIDFAEMEDALVRRKTSKIGCQIERENEPDADGHKHPDAPEGVCKNPDDKFTGSSGFRLIPGNVCIREGGVDLDKQTERVCSETFKNPPAGQIVVEKSFFTADYYKDYFYLERKESSKGEDETVIMITSEQQIFLSRDHGKKWKQILEEEKITRIEPHRFFDDVAYFLTNNGDGWYTLDRGDTFRKFKAPLPPNQDKLPVLSFHPDRRDWLIWTGADECNGNGGNCHSVAYYTTNLGGEWHFLMRYVRRCEFISRDARGSSDKLVFCEQFENENPSNKHLQLLSTEDWFAEKRLHYSNILDFATMQEFIIVAIRGENSQDSLRIGVSIDGKTFADAELPANVQIPIQRAYTVLESRTHAAFLHVTINNIEDHEYGSIIKSNSNGTSYVLSLSAVNRNSRGYADFEKMQGLEGVAMANVVGNVADVENGAAKKFRTMITHNDGAEWTLMRPPDKDSEGRSYACSTKGGKPTDACALHLHSYTERADPRDTYSSPSAVGIMIGTGNVGDYLSLKSKADTFITRDAGITWEEVKKGKYQWEFGDSGSIIVLVPESTPTKTLLYSLDEGRSWKDFEFSEVEMQIQDISTVPSDTSRNFLLWGKEVGQGKKPGIATVNIDFSGLKERSKQCVLDEKKPEADDYYLWEPKHPLQPNGCLFGHRAKYHRKRPDKDCYNGRELQHLDSIGDICECTRSDYECDYNYEPQSDGSCARVAGLEPLDPKLVCTENPKAVEWYEPTGYRRIPLTKCQGGKQLNHIVAHPCPNKEEEFFKKHPRLRGIGLFFVILIPICLAATAGYYVYNHWDGKFGRIRLGETGSGGLFDRDSLLVSIPVSMVAGVVAVITALPLLVSSLWRSVSGYVRVPGGASSRRPYSSRDSFAARRSDYVGVVEDEDELLGTDDFDDDEEGDERNGQV.

The N-terminal stretch at 1-21 (MILRRLLLAGSLLLATAFTSA) is a signal peptide. At 22–1284 (KKADGPKISV…FFKKHPRLRG (1263 aa)) the chain is on the lumenal side. Residues 61 to 71 (YVSRDAGANWD) form a BNR 1 repeat. N271 and N321 each carry an N-linked (GlcNAc...) asparagine glycan. 2 BNR repeats span residues 377 to 386 (ISFDDGRTFQ) and 644 to 654 (FLSRDHGKKWK). N893 is a glycosylation site (N-linked (GlcNAc...) asparagine). BNR repeat units follow at residues 1028–1038 (FITRDAGITWE) and 1070–1079 (YSLDEGRSWK). A helical membrane pass occupies residues 1285–1305 (IGLFFVILIPICLAATAGYYV). Residues 1306 to 1331 (YNHWDGKFGRIRLGETGSGGLFDRDS) are Cytoplasmic-facing. A helical membrane pass occupies residues 1332–1352 (LLVSIPVSMVAGVVAVITALP). Residues 1353–1420 (LLVSSLWRSV…EEGDERNGQV (68 aa)) are Lumenal-facing. Positions 1397–1414 (DEDELLGTDDFDDDEEGD) are enriched in acidic residues. The tract at residues 1397-1420 (DEDELLGTDDFDDDEEGDERNGQV) is disordered.

This sequence belongs to the VPS10-related sortilin family.

It localises to the golgi apparatus. The protein localises to the trans-Golgi network membrane. Its subcellular location is the prevacuolar compartment membrane. Its function is as follows. Functions as a sorting receptor in the Golgi compartment required for the intracellular sorting and delivery of soluble vacuolar proteins, like carboxypeptidase Y (CPY) and proteinase A. Executes multiple rounds of sorting by cycling between the late Golgi and a prevacuolar endosome-like compartment. The chain is Vacuolar protein sorting/targeting protein 10 (VPS10) from Ajellomyces capsulatus (strain H143) (Darling's disease fungus).